Reading from the N-terminus, the 490-residue chain is Betaine aldehyde dehydrogenase (490 aa).

K(+) is bound by residues threonine 26, isoleucine 27, and aspartate 93. Residue glycine 150 to tryptophan 152 coordinates NAD(+). The Charge relay system role is filled by lysine 162. Lysine 176–glutamate 179 serves as a coordination point for NAD(+). Residue valine 180 participates in K(+) binding. NAD(+) is bound at residue glycine 230–serine 233. Leucine 246 is a K(+) binding site. Glutamate 252 functions as the Proton acceptor in the catalytic mechanism. Positions 254, 286, and 387 each coordinate NAD(+). The active-site Nucleophile is the cysteine 286. Cysteine 286 carries the cysteine sulfenic acid (-SOH) modification. Lysine 457 and glycine 460 together coordinate K(+). The active-site Charge relay system is the glutamate 464.

Belongs to the aldehyde dehydrogenase family. Dimer of dimers. K(+) is required as a cofactor.

The enzyme catalyses betaine aldehyde + NAD(+) + H2O = glycine betaine + NADH + 2 H(+). It participates in amine and polyamine biosynthesis; betaine biosynthesis via choline pathway; betaine from betaine aldehyde: step 1/1. In terms of biological role, involved in the biosynthesis of the osmoprotectant glycine betaine. Catalyzes the irreversible oxidation of betaine aldehyde to the corresponding acid. This is Betaine aldehyde dehydrogenase from Escherichia coli (strain 55989 / EAEC).